The chain runs to 284 residues: uncharacterized protein (284 aa).

This sequence belongs to the IIV-6 436R family.

This is an uncharacterized protein from Invertebrate iridescent virus 3 (IIV-3).